Here is a 498-residue protein sequence, read N- to C-terminus: ATP synthase subunit beta, chloroplastic (498 aa).

Residue 172–179 participates in ATP binding; it reads GGAGVGKT.

This sequence belongs to the ATPase alpha/beta chains family. In terms of assembly, F-type ATPases have 2 components, CF(1) - the catalytic core - and CF(0) - the membrane proton channel. CF(1) has five subunits: alpha(3), beta(3), gamma(1), delta(1), epsilon(1). CF(0) has four main subunits: a(1), b(1), b'(1) and c(9-12).

It localises to the plastid. The protein resides in the chloroplast thylakoid membrane. The catalysed reaction is ATP + H2O + 4 H(+)(in) = ADP + phosphate + 5 H(+)(out). Produces ATP from ADP in the presence of a proton gradient across the membrane. The catalytic sites are hosted primarily by the beta subunits. This Lolium perenne (Perennial ryegrass) protein is ATP synthase subunit beta, chloroplastic.